A 549-amino-acid chain; its full sequence is Arginine--tRNA ligase (549 aa).

Positions 113–123 (ANPDGPLHIGH) match the 'HIGH' region motif.

Belongs to the class-I aminoacyl-tRNA synthetase family.

Its subcellular location is the cytoplasm. The enzyme catalyses tRNA(Arg) + L-arginine + ATP = L-arginyl-tRNA(Arg) + AMP + diphosphate. This is Arginine--tRNA ligase (argS) from Archaeoglobus fulgidus (strain ATCC 49558 / DSM 4304 / JCM 9628 / NBRC 100126 / VC-16).